Consider the following 256-residue polypeptide: Mannose-specific lectin 1 (256 aa).

A signal peptide spans 1-23 (MAKLLLFLLPAILGLLVPRSAVA). Bulb-type lectin domains follow at residues 26-131 (TNYL…PWVR) and 145-252 (NNLL…SKRS). Residues 51 to 55 (QDDCN), tyrosine 59, tryptophan 63, glutamine 64, 170 to 174 (QGDCN), tyrosine 178, and 182 to 185 (YGWQ) each bind beta-D-mannose. Positions 51–59 (QDDCNLVLY) match the Carbohydrate-binding motif 1 motif. 2 disulfides stabilise this stretch: cysteine 54/cysteine 74 and cysteine 173/cysteine 195. The Carbohydrate-binding motif 2 signature appears at 170–178 (QGDCNLVLY).

Forms heterodimers.

It localises to the secreted. Functionally, mannose-specific lectin. Shows agglutinating activity towards erythrocytes from rabbit. This chain is Mannose-specific lectin 1, found in Remusatia vivipara (Hitchhiker elephant ear).